The primary structure comprises 180 residues: Oligoribonuclease (180 aa).

The 162-residue stretch at 7-168 (LVWIDLEMTG…QDIRDSIDEL (162 aa)) folds into the Exonuclease domain. The active site involves Y128.

It belongs to the oligoribonuclease family.

The protein resides in the cytoplasm. 3'-to-5' exoribonuclease specific for small oligoribonucleotides. In Dichelobacter nodosus (strain VCS1703A), this protein is Oligoribonuclease.